A 702-amino-acid chain; its full sequence is Phosphoribosylformylglycinamidine synthase subunit PurL (702 aa).

Histidine 36 is a catalytic residue. Residues tyrosine 39 and lysine 80 each coordinate ATP. Residue glutamate 82 coordinates Mg(2+). Substrate-binding positions include 83-86 and arginine 105; that span reads SHNH. Residue histidine 84 is the Proton acceptor of the active site. Aspartate 106 is a binding site for Mg(2+). Glutamine 225 lines the substrate pocket. Residue aspartate 251 participates in Mg(2+) binding. Residue 293–295 participates in substrate binding; sequence ETQ. The ATP site is built by aspartate 468 and glycine 505. Substrate is bound at residue serine 508.

The protein belongs to the FGAMS family. Monomer. Part of the FGAM synthase complex composed of 1 PurL, 1 PurQ and 2 PurS subunits.

The protein localises to the cytoplasm. It carries out the reaction N(2)-formyl-N(1)-(5-phospho-beta-D-ribosyl)glycinamide + L-glutamine + ATP + H2O = 2-formamido-N(1)-(5-O-phospho-beta-D-ribosyl)acetamidine + L-glutamate + ADP + phosphate + H(+). It participates in purine metabolism; IMP biosynthesis via de novo pathway; 5-amino-1-(5-phospho-D-ribosyl)imidazole from N(2)-formyl-N(1)-(5-phospho-D-ribosyl)glycinamide: step 1/2. In terms of biological role, part of the phosphoribosylformylglycinamidine synthase complex involved in the purines biosynthetic pathway. Catalyzes the ATP-dependent conversion of formylglycinamide ribonucleotide (FGAR) and glutamine to yield formylglycinamidine ribonucleotide (FGAM) and glutamate. The FGAM synthase complex is composed of three subunits. PurQ produces an ammonia molecule by converting glutamine to glutamate. PurL transfers the ammonia molecule to FGAR to form FGAM in an ATP-dependent manner. PurS interacts with PurQ and PurL and is thought to assist in the transfer of the ammonia molecule from PurQ to PurL. The protein is Phosphoribosylformylglycinamidine synthase subunit PurL of Metallosphaera sedula (strain ATCC 51363 / DSM 5348 / JCM 9185 / NBRC 15509 / TH2).